A 228-amino-acid polypeptide reads, in one-letter code: UPF0173 metal-dependent hydrolase RBAM_026340 (228 aa).

It belongs to the UPF0173 family.

The protein is UPF0173 metal-dependent hydrolase RBAM_026340 of Bacillus velezensis (strain DSM 23117 / BGSC 10A6 / LMG 26770 / FZB42) (Bacillus amyloliquefaciens subsp. plantarum).